We begin with the raw amino-acid sequence, 202 residues long: uncharacterized protein (202 aa).

The signal sequence occupies residues 1-19 (MRRKNGFSVASVFILCSIA). A helical transmembrane segment spans residues 177–199 (FLASSSSSFSSFLPSIAIILFFV).

It localises to the membrane. This is an uncharacterized protein from Caenorhabditis elegans.